A 91-amino-acid chain; its full sequence is UPF0223 protein SAB0963 (91 aa).

Belongs to the UPF0223 family.

The chain is UPF0223 protein SAB0963 from Staphylococcus aureus (strain bovine RF122 / ET3-1).